A 446-amino-acid chain; its full sequence is Cyclin-F2-2 (446 aa).

Residues 191-216 (YNGDNDAPAPDNSTASRPQLCAPYDD) are disordered.

It belongs to the cyclin family. Cyclin F subfamily.

The sequence is that of Cyclin-F2-2 (CYCF2-2) from Oryza sativa subsp. japonica (Rice).